The sequence spans 75 residues: Small ribosomal subunit protein bS18 (75 aa).

It belongs to the bacterial ribosomal protein bS18 family. In terms of assembly, part of the 30S ribosomal subunit. Forms a tight heterodimer with protein bS6.

In terms of biological role, binds as a heterodimer with protein bS6 to the central domain of the 16S rRNA, where it helps stabilize the platform of the 30S subunit. This Pseudoalteromonas atlantica (strain T6c / ATCC BAA-1087) protein is Small ribosomal subunit protein bS18.